Consider the following 97-residue polypeptide: Co-chaperonin GroES (97 aa).

Belongs to the GroES chaperonin family. As to quaternary structure, heptamer of 7 subunits arranged in a ring. Interacts with the chaperonin GroEL.

Its subcellular location is the cytoplasm. Functionally, together with the chaperonin GroEL, plays an essential role in assisting protein folding. The GroEL-GroES system forms a nano-cage that allows encapsulation of the non-native substrate proteins and provides a physical environment optimized to promote and accelerate protein folding. GroES binds to the apical surface of the GroEL ring, thereby capping the opening of the GroEL channel. This chain is Co-chaperonin GroES, found in Buchnera aphidicola subsp. Tetraneura caerulescens.